Reading from the N-terminus, the 272-residue chain is Dermonecrotic toxin LvSicTox-alphaIC1aiii (272 aa).

Residue H4 is part of the active site. Positions 24 and 26 each coordinate Mg(2+). H40 functions as the Nucleophile in the catalytic mechanism. 2 disulfides stabilise this stretch: C44/C50 and C46/C189. D84 is a binding site for Mg(2+).

This sequence belongs to the arthropod phospholipase D family. Class II subfamily. It depends on Mg(2+) as a cofactor. As to expression, expressed by the venom gland.

It is found in the secreted. The catalysed reaction is an N-(acyl)-sphingosylphosphocholine = an N-(acyl)-sphingosyl-1,3-cyclic phosphate + choline. It catalyses the reaction an N-(acyl)-sphingosylphosphoethanolamine = an N-(acyl)-sphingosyl-1,3-cyclic phosphate + ethanolamine. The enzyme catalyses a 1-acyl-sn-glycero-3-phosphocholine = a 1-acyl-sn-glycero-2,3-cyclic phosphate + choline. It carries out the reaction a 1-acyl-sn-glycero-3-phosphoethanolamine = a 1-acyl-sn-glycero-2,3-cyclic phosphate + ethanolamine. Dermonecrotic toxins cleave the phosphodiester linkage between the phosphate and headgroup of certain phospholipids (sphingolipid and lysolipid substrates), forming an alcohol (often choline) and a cyclic phosphate. This toxin acts on sphingomyelin (SM). It may also act on ceramide phosphoethanolamine (CPE), lysophosphatidylcholine (LPC) and lysophosphatidylethanolamine (LPE), but not on lysophosphatidylserine (LPS), and lysophosphatidylglycerol (LPG). It acts by transphosphatidylation, releasing exclusively cyclic phosphate products as second products. Induces dermonecrosis, hemolysis, increased vascular permeability, edema, inflammatory response, and platelet aggregation. The protein is Dermonecrotic toxin LvSicTox-alphaIC1aiii of Loxosceles variegata (Recluse spider).